Reading from the N-terminus, the 355-residue chain is Peptide chain release factor 1 (355 aa).

Gln231 carries the N5-methylglutamine modification.

Belongs to the prokaryotic/mitochondrial release factor family. Post-translationally, methylated by PrmC. Methylation increases the termination efficiency of RF1.

The protein localises to the cytoplasm. Functionally, peptide chain release factor 1 directs the termination of translation in response to the peptide chain termination codons UAG and UAA. This chain is Peptide chain release factor 1, found in Sulfurovum sp. (strain NBC37-1).